The following is a 328-amino-acid chain: D-cysteine desulfhydrase (328 aa).

K51 carries the N6-(pyridoxal phosphate)lysine modification.

The protein belongs to the ACC deaminase/D-cysteine desulfhydrase family. In terms of assembly, homodimer. Requires pyridoxal 5'-phosphate as cofactor.

It catalyses the reaction D-cysteine + H2O = hydrogen sulfide + pyruvate + NH4(+) + H(+). Catalyzes the alpha,beta-elimination reaction of D-cysteine and of several D-cysteine derivatives. It could be a defense mechanism against D-cysteine. This chain is D-cysteine desulfhydrase, found in Escherichia coli (strain UTI89 / UPEC).